Here is a 138-residue protein sequence, read N- to C-terminus: Putative pre-16S rRNA nuclease (138 aa).

The protein belongs to the YqgF nuclease family.

It localises to the cytoplasm. Could be a nuclease involved in processing of the 5'-end of pre-16S rRNA. The polypeptide is Putative pre-16S rRNA nuclease (Mycoplasma genitalium (strain ATCC 33530 / DSM 19775 / NCTC 10195 / G37) (Mycoplasmoides genitalium)).